Here is a 380-residue protein sequence, read N- to C-terminus: Shaggy-related protein kinase eta (380 aa).

One can recognise a Protein kinase domain in the interval 40-324 (YMAERVVGTG…ALEACAHPFF (285 aa)). ATP contacts are provided by residues 46–54 (VGTGSFGIV) and lysine 69. Threonine 104 carries the phosphothreonine modification. Serine 105 carries the post-translational modification Phosphoserine. Aspartate 165 acts as the Proton acceptor in catalysis. A Phosphoserine modification is found at serine 187. Tyrosine 200 carries the phosphotyrosine modification. Phosphothreonine is present on residues threonine 220 and threonine 261. Serine 310 bears the Phosphoserine mark. Threonine 314 carries the post-translational modification Phosphothreonine. Serine 353 is modified (phosphoserine).

The protein belongs to the protein kinase superfamily. CMGC Ser/Thr protein kinase family. GSK-3 subfamily. As to quaternary structure, interacts in vitro with the C-terminal fragment of BZR1 and with BES1/BZR2, but not through the kinase domain. Interacts with BHLH150, beet curly top virus AL4/C4 and tomato golden mosaic virus AL4/AC4. Interacts with YDA. Interacts with MKK4. Interacts with KIB1 and KIB2 in a brassinosteroid (BR)-dependent manner. Interacts with BSK1, BSK6, BSK8 and BSK11. Binds to WRKY46, WRKY54 and WRKY70. Component of a complex made of POLAR, BASL, ASK7/BIN2 and ASK3/SK12. Binds to POLAR and BASL. Post-translationally, autophosphorylated mainly on threonine and serine residues. In terms of processing, ubiquitination and subsequent proteasomal degradation mediated by KIB1. As to expression, in the two outer cell layers of the developing seed coat and restricted to the suspensor cells in developing embryos. Mostly expressed in stomatal lineage cells with asymmetric cell division (ACD) potential. Observed in small cells of non-protruding hypocotyl cell files and of developing cotyledon epidermis.

The protein resides in the cytoplasm. It localises to the cell cortex. The protein localises to the nucleus. It is found in the cell membrane. It catalyses the reaction L-seryl-[protein] + ATP = O-phospho-L-seryl-[protein] + ADP + H(+). It carries out the reaction L-threonyl-[protein] + ATP = O-phospho-L-threonyl-[protein] + ADP + H(+). Its activity is regulated as follows. Inactivated by an unknown mechanism after binding of brassinosteroids to the brassinosteroid receptor complex. Inhibited by lithium. Inhibited by dephosphorylation at Tyr-200 by BSU1. Competitive inhibition by KIB1 that reduces substrate (e.g. BZR1) access. Repressed by bikinin. Its function is as follows. Negative regulator in brassinosteroid signal transduction pathway important for plant growth. May be also involved in auxin signaling pathway. Phosphorylates and increases the degradation of BZR1 and BZR2/BES1 by the proteasome. Phosphorylates BHLH150, beet curly top virus C4 and tomato golden mosaic virus AC4 on threonine and serine residues. Upon brassinosteroid signaling, inhibits stomatal development by phosphorylating and inhibiting the MAPKK kinase YDA and the MAPK kinases MKK4 and MKK5. Phosphorylates BSK1, BSK3, BSK5, BSK6, BSK8 and BSK11 in vitro. Phoyphorylates and destabilizes WRKY46, WRKY54 and WRKY70. Mediates BASL nuclear exclusion; kinase activity is required for this function. Required first at the cortical polarity site, to restrict MAPK signaling and promote asymmetric cell division (ACD), and second in the nucleus of stomatal lineage ground cells (SLGCs) or meristemoids, to limit cell division and to promote differentiation into pavement or stomatal guard cells, respectively, likely by initiating BASL polarization. Phosphorylates BASL, YDA and SPCH in vitro and POLAR in vivo. Phosphorylates and inhibits SPCH in the nucleus of SLGC undergoing ACD, thus negatively regulating stomatal development. The protein is Shaggy-related protein kinase eta of Arabidopsis thaliana (Mouse-ear cress).